A 406-amino-acid polypeptide reads, in one-letter code: FBD-associated F-box protein At1g60410 (406 aa).

The 51-residue stretch at 9–59 (KDRLSDLPCHLLCRILSNLSTKESVRTSVLSPRWSNLWSLVSVLDLDFQDF) folds into the F-box domain. Positions 355 to 405 (MEEIKLSPVPQCVLSSLDFLQLKAPSTPSKMKLATYFRKKCTRLTKMLLSG) constitute an FBD domain.

In Arabidopsis thaliana (Mouse-ear cress), this protein is FBD-associated F-box protein At1g60410.